The chain runs to 239 residues: Probable septum site-determining protein MinC (239 aa).

Belongs to the MinC family. As to quaternary structure, interacts with MinD and FtsZ.

Cell division inhibitor that blocks the formation of polar Z ring septums. Rapidly oscillates between the poles of the cell to destabilize FtsZ filaments that have formed before they mature into polar Z rings. Prevents FtsZ polymerization. The polypeptide is Probable septum site-determining protein MinC (Colwellia psychrerythraea (strain 34H / ATCC BAA-681) (Vibrio psychroerythus)).